Here is a 420-residue protein sequence, read N- to C-terminus: Tyrosine--tRNA ligase (420 aa).

Residue Tyr-36 participates in L-tyrosine binding. The 'HIGH' region signature appears at 41 to 50 (PTADSLHIGH). L-tyrosine contacts are provided by Tyr-170 and Gln-174. Residues 231–235 (KFGKT) carry the 'KMSKS' region motif. Lys-234 is a binding site for ATP. Residues 353–420 (RNIVEVIVET…KKKYFMVNYK (68 aa)) enclose the S4 RNA-binding domain.

The protein belongs to the class-I aminoacyl-tRNA synthetase family. TyrS type 1 subfamily. As to quaternary structure, homodimer.

It localises to the cytoplasm. The enzyme catalyses tRNA(Tyr) + L-tyrosine + ATP = L-tyrosyl-tRNA(Tyr) + AMP + diphosphate + H(+). Its function is as follows. Catalyzes the attachment of tyrosine to tRNA(Tyr) in a two-step reaction: tyrosine is first activated by ATP to form Tyr-AMP and then transferred to the acceptor end of tRNA(Tyr). In Staphylococcus saprophyticus subsp. saprophyticus (strain ATCC 15305 / DSM 20229 / NCIMB 8711 / NCTC 7292 / S-41), this protein is Tyrosine--tRNA ligase.